The sequence spans 325 residues: Beta-ketoacyl-[acyl-carrier-protein] synthase III (325 aa).

Catalysis depends on residues Cys112 and His250. The tract at residues 251–255 (QANIR) is ACP-binding. Residue Asn280 is part of the active site.

The protein belongs to the thiolase-like superfamily. FabH family. As to quaternary structure, homodimer.

It localises to the cytoplasm. It carries out the reaction malonyl-[ACP] + acetyl-CoA + H(+) = 3-oxobutanoyl-[ACP] + CO2 + CoA. It functions in the pathway lipid metabolism; fatty acid biosynthesis. Its function is as follows. Catalyzes the condensation reaction of fatty acid synthesis by the addition to an acyl acceptor of two carbons from malonyl-ACP. Catalyzes the first condensation reaction which initiates fatty acid synthesis and may therefore play a role in governing the total rate of fatty acid production. Possesses both acetoacetyl-ACP synthase and acetyl transacylase activities. Its substrate specificity determines the biosynthesis of branched-chain and/or straight-chain of fatty acids. This chain is Beta-ketoacyl-[acyl-carrier-protein] synthase III, found in Streptococcus mutans serotype c (strain ATCC 700610 / UA159).